A 360-amino-acid polypeptide reads, in one-letter code: UPF0496 protein At3g19250 (360 aa).

The interval 1 to 29 (MPHCFTFKPASPEGSLGDDHLPHPSPEGS) is disordered. A run of 2 helical transmembrane segments spans residues 205 to 225 (HHAT…VAAS) and 229 to 249 (IAYH…TPYL).

Belongs to the UPF0496 family.

Its subcellular location is the membrane. The sequence is that of UPF0496 protein At3g19250 from Arabidopsis thaliana (Mouse-ear cress).